A 90-amino-acid polypeptide reads, in one-letter code: Putative defensin-like protein 168 (90 aa).

The N-terminal stretch at 1–27 is a signal peptide; the sequence is MKYFTLFMISYIFISIFVFSHIHDVEA. 4 disulfides stabilise this stretch: cysteine 32-cysteine 90, cysteine 43-cysteine 66, cysteine 51-cysteine 84, and cysteine 64-cysteine 86.

The protein belongs to the DEFL family.

The protein localises to the secreted. This Arabidopsis thaliana (Mouse-ear cress) protein is Putative defensin-like protein 168.